A 98-amino-acid chain; its full sequence is Class II hydrophobin 3 (98 aa).

The first 18 residues, 1-18 (MQFTTTTLIAILSALAVA), serve as a signal peptide directing secretion. 2 N-linked (GlcNAc...) asparagine glycosylation sites follow: asparagine 26 and asparagine 54. 4 disulfide bridges follow: cysteine 35–cysteine 83, cysteine 44–cysteine 74, cysteine 45–cysteine 57, and cysteine 84–cysteine 95.

It belongs to the cerato-ulmin hydrophobin family.

It is found in the secreted. Its subcellular location is the cell wall. Functionally, aerial growth, conidiation, and dispersal of filamentous fungi in the environment rely upon a capability of their secreting small amphipathic proteins called hydrophobins (HPBs) with low sequence identity. Class I can self-assemble into an outermost layer of rodlet bundles on aerial cell surfaces, conferring cellular hydrophobicity that supports fungal growth, development and dispersal; whereas Class II form highly ordered films at water-air interfaces through intermolecular interactions but contribute nothing to the rodlet structure. In Botryotinia fuckeliana, hydrophobins are not involved in conferring surface hydrophobicity to conidia and aerial hyphae and their function in sclerotia and fruiting bodies remains to be investigated. The chain is Class II hydrophobin 3 from Botryotinia fuckeliana (strain B05.10) (Noble rot fungus).